Consider the following 414-residue polypeptide: Eukaryotic initiation factor 4A-3 (414 aa).

The short motif at 41 to 69 (ESFDDMGLQENLLRGIYAYGFEKPSAIQQ) is the Q motif element. Positions 72–242 (IVPFCKGLDV…RKFMNKPVRI (171 aa)) constitute a Helicase ATP-binding domain. Residue 85-92 (AQSGTGKT) coordinates ATP. A DEAD box motif is present at residues 190–193 (DEAD). One can recognise a Helicase C-terminal domain in the interval 253–414 (GIKQFYVNVE…ELPANVADLL (162 aa)).

This sequence belongs to the DEAD box helicase family. eIF4A subfamily. In terms of assembly, eIF4F is a multi-subunit complex, the composition of which varies with external and internal environmental conditions. It is composed of at least EIF4A, EIF4E and EIF4G. Interacts with DRM2 (via UBA domains).

Its subcellular location is the cytoplasm. The protein localises to the nucleus. The catalysed reaction is ATP + H2O = ADP + phosphate + H(+). In terms of biological role, ATP-dependent RNA helicase which is a subunit of the eIF4F complex involved in cap recognition and is required for mRNA binding to ribosome. In the current model of translation initiation, eIF4A unwinds RNA secondary structures in the 5'-UTR of mRNAs which is necessary to allow efficient binding of the small ribosomal subunit, and subsequent scanning for the initiator codon. The polypeptide is Eukaryotic initiation factor 4A-3 (Oryza sativa subsp. japonica (Rice)).